We begin with the raw amino-acid sequence, 486 residues long: Malonate-semialdehyde dehydrogenase 1 (486 aa).

NAD(+) is bound by residues F154, K178, E181, R182, and S231. Residue C286 is the Nucleophile of the active site. An NAD(+)-binding site is contributed by E386.

Belongs to the aldehyde dehydrogenase family. IolA subfamily. In terms of assembly, homotetramer.

The enzyme catalyses 3-oxopropanoate + NAD(+) + CoA + H2O = hydrogencarbonate + acetyl-CoA + NADH + H(+). It carries out the reaction 2-methyl-3-oxopropanoate + NAD(+) + CoA + H2O = propanoyl-CoA + hydrogencarbonate + NADH + H(+). It functions in the pathway polyol metabolism; myo-inositol degradation into acetyl-CoA; acetyl-CoA from myo-inositol: step 7/7. In terms of biological role, catalyzes the oxidation of malonate semialdehyde (MSA) and methylmalonate semialdehyde (MMSA) into acetyl-CoA and propanoyl-CoA, respectively. Is involved in a myo-inositol catabolic pathway. Bicarbonate, and not CO2, is the end-product of the enzymatic reaction. This Oceanobacillus iheyensis (strain DSM 14371 / CIP 107618 / JCM 11309 / KCTC 3954 / HTE831) protein is Malonate-semialdehyde dehydrogenase 1.